Here is a 144-residue protein sequence, read N- to C-terminus: Granulocyte-macrophage colony-stimulating factor (144 aa).

The signal sequence occupies residues 1–17; the sequence is MWLQSLLLLGTVACSIS. 3 O-linked (GalNAc...) serine glycosylation sites follow: Ser22, Ser24, and Ser26. A glycan (O-linked (GalNAc...) threonine; partial) is linked at Thr27. 2 N-linked (GlcNAc...) asparagine glycosylation sites follow: Asn44 and Asn54. Disulfide bonds link Cys71/Cys113 and Cys105/Cys138.

The protein belongs to the GM-CSF family. In terms of assembly, monomer. The signaling GM-CSF receptor complex is a dodecamer of two head-to-head hexamers of two alpha, two beta, and two ligand subunits.

Its subcellular location is the secreted. Cytokine that stimulates the growth and differentiation of hematopoietic precursor cells from various lineages, including granulocytes, macrophages, eosinophils and erythrocytes. The protein is Granulocyte-macrophage colony-stimulating factor (CSF2) of Homo sapiens (Human).